The chain runs to 439 residues: Probable tRNA pseudouridine synthase D (439 aa).

The active-site Nucleophile is the aspartate 87. A TRUD domain is found at 166–391; it reads GVPNFFGIQR…SKGLRREILL (226 aa).

This sequence belongs to the pseudouridine synthase TruD family.

The enzyme catalyses uridine(13) in tRNA = pseudouridine(13) in tRNA. Functionally, could be responsible for synthesis of pseudouridine from uracil-13 in transfer RNAs. This is Probable tRNA pseudouridine synthase D from Methanococcoides burtonii (strain DSM 6242 / NBRC 107633 / OCM 468 / ACE-M).